Reading from the N-terminus, the 139-residue chain is Nucleoside diphosphate kinase (139 aa).

Residues lysine 11, phenylalanine 59, arginine 87, threonine 93, arginine 104, and asparagine 114 each contribute to the ATP site. The active-site Pros-phosphohistidine intermediate is the histidine 117.

This sequence belongs to the NDK family. In terms of assembly, homotetramer. Requires Mg(2+) as cofactor.

The protein resides in the cytoplasm. It carries out the reaction a 2'-deoxyribonucleoside 5'-diphosphate + ATP = a 2'-deoxyribonucleoside 5'-triphosphate + ADP. The catalysed reaction is a ribonucleoside 5'-diphosphate + ATP = a ribonucleoside 5'-triphosphate + ADP. Major role in the synthesis of nucleoside triphosphates other than ATP. The ATP gamma phosphate is transferred to the NDP beta phosphate via a ping-pong mechanism, using a phosphorylated active-site intermediate. The sequence is that of Nucleoside diphosphate kinase from Flavobacterium johnsoniae (strain ATCC 17061 / DSM 2064 / JCM 8514 / BCRC 14874 / CCUG 350202 / NBRC 14942 / NCIMB 11054 / UW101) (Cytophaga johnsonae).